The primary structure comprises 373 residues: 8-amino-7-oxononanoate synthase (373 aa).

Position 16 (Arg16) interacts with substrate. 93–94 (GF) serves as a coordination point for pyridoxal 5'-phosphate. Residue His118 participates in substrate binding. Residues Ser165, 190-193 (DEAH), and 222-225 (TFSK) each bind pyridoxal 5'-phosphate. Lys225 carries the N6-(pyridoxal phosphate)lysine modification. Thr334 contributes to the substrate binding site.

Belongs to the class-II pyridoxal-phosphate-dependent aminotransferase family. BioF subfamily. In terms of assembly, homodimer. Pyridoxal 5'-phosphate is required as a cofactor.

The catalysed reaction is 6-carboxyhexanoyl-[ACP] + L-alanine + H(+) = (8S)-8-amino-7-oxononanoate + holo-[ACP] + CO2. Its pathway is cofactor biosynthesis; biotin biosynthesis. Its function is as follows. Catalyzes the decarboxylative condensation of pimeloyl-[acyl-carrier protein] and L-alanine to produce 8-amino-7-oxononanoate (AON), [acyl-carrier protein], and carbon dioxide. The chain is 8-amino-7-oxononanoate synthase from Helicobacter pylori (strain ATCC 700392 / 26695) (Campylobacter pylori).